A 487-amino-acid polypeptide reads, in one-letter code: 3-octaprenyl-4-hydroxybenzoate carboxy-lyase (487 aa).

N172 is a binding site for Mn(2+). Prenylated FMN contacts are provided by residues 175–177 (IYR), 189–191 (RWL), and 194–195 (RG). Position 238 (E238) interacts with Mn(2+). D287 (proton donor) is an active-site residue.

Belongs to the UbiD family. In terms of assembly, homohexamer. It depends on prenylated FMN as a cofactor. Mn(2+) serves as cofactor.

Its subcellular location is the cell membrane. The enzyme catalyses a 4-hydroxy-3-(all-trans-polyprenyl)benzoate + H(+) = a 2-(all-trans-polyprenyl)phenol + CO2. It functions in the pathway cofactor biosynthesis; ubiquinone biosynthesis. In terms of biological role, catalyzes the decarboxylation of 3-octaprenyl-4-hydroxy benzoate to 2-octaprenylphenol, an intermediate step in ubiquinone biosynthesis. The sequence is that of 3-octaprenyl-4-hydroxybenzoate carboxy-lyase from Nitrosomonas europaea (strain ATCC 19718 / CIP 103999 / KCTC 2705 / NBRC 14298).